We begin with the raw amino-acid sequence, 189 residues long: Protein Rex (189 aa).

Over residues 1 to 16 (MPKTRRRPRRSQRKRP) the composition is skewed to basic residues. Positions 1–27 (MPKTRRRPRRSQRKRPPTPWPTSQGLD) are disordered. Positions 2–18 (PKTRRRPRRSQRKRPPT) match the Nuclear localization signal, and RNA-binding (RxRE) motif. The interval 56–70 (RPAYIVTPYWPPVQS) is homomultimerization. At Ser-70 the chain carries Phosphoserine; by host. The Nuclear export signal motif lies at 82 to 93 (LSAQLYSSLSLD). The segment at 87–189 (YSSLSLDSPP…PPSPGPSCPM (103 aa)) is disordered. The span at 105–114 (PLRSLPRQSL) shows a compositional bias: low complexity. The homomultimerization stretch occupies residues 123–131 (PSSRPCANT). Residues 143-164 (LGSTSQPCLFQTPDSGPKTCTP) are compositionally biased toward polar residues. At Thr-174 the chain carries Phosphothreonine; by host. Ser-177 carries the phosphoserine; by host modification. Positions 178-189 (FPPPSPGPSCPM) are enriched in pro residues.

It belongs to the deltaretrovirus Rex protein family. Homomultimer. Multimeric assembly is essential for activity and involves XPO1. Binds to human XPO1 and KPNB1. Interacts (via N-terminal nuclear localization signal) with human NPM1. Post-translationally, phosphorylated.

Its subcellular location is the host nucleus. It localises to the host nucleolus. The protein resides in the host cytoplasm. Rex escorts unspliced gag-pro-pol and singly spliced env mRNAs out of the nucleus of infected cells. These mRNAs carry a recognition sequence called Rex responsive element (RxRE or XRE) located at the 3' region of the long terminal repeat (LTR). This function is essential since most HTLV proteins are translated from unspliced or partially spliced pre-mRNAs that cannot exit the nucleus by the pathway used by fully processed cellular mRNAs. Rex itself is translated from a fully spliced mRNA that probably readily exits the nucleus. Rex's nuclear localization signal (NLS) binds directly to KPNB1/importin beta-1 without previous binding to KPNA1/importin alpha-1. KPNB1 binds to the GDP bound form of RAN (Ran-GDP) and targets Rex to the nucleus. In the nucleus, the conversion from Ran-GDP to Ran-GTP dissociates Rex from KPNB1 and allows Rex's binding to the RRE in viral pre-mRNAs. Rex multimerizes on the RRE via cooperative assembly. This multimerization is critical for its full biological activity, since it may shield the viral RNA from being spliced or down-regulated, and probably exposes Rex's nuclear export signal (NES) to the surface. Rex can then form a complex with XPO1/CRM1, RANBP3 and Ran-GTP, leading to nuclear export of the complex. Conversion from Ran-GTP to Ran-GDP mediates dissociation of the Rex/RRE/XPO1/RANBP3/RAN complex, so that Rex can return to the nucleus for a subsequent round of export. The sequence is that of Protein Rex from Human T-cell leukemia virus 1 (isolate Caribbea HS-35 subtype A) (HTLV-1).